The following is a 474-amino-acid chain: ATP synthase subunit beta 2 (474 aa).

An ATP-binding site is contributed by Gly151–Thr158.

The protein belongs to the ATPase alpha/beta chains family. F-type ATPases have 2 components, CF(1) - the catalytic core - and CF(0) - the membrane proton channel. CF(1) has five subunits: alpha(3), beta(3), gamma(1), delta(1), epsilon(1). CF(0) has four main subunits: a(1), b(1), b'(1) and c(9-12).

The protein localises to the cell inner membrane. The catalysed reaction is ATP + H2O + 4 H(+)(in) = ADP + phosphate + 5 H(+)(out). Produces ATP from ADP in the presence of a proton gradient across the membrane. The catalytic sites are hosted primarily by the beta subunits. The polypeptide is ATP synthase subunit beta 2 (Dinoroseobacter shibae (strain DSM 16493 / NCIMB 14021 / DFL 12)).